We begin with the raw amino-acid sequence, 520 residues long: 6-phosphofructo-2-kinase/fructose-2,6-bisphosphatase 3 (520 aa).

The segment at 1-245 is 6-phosphofructo-2-kinase; sequence MPLELTQSRV…VYYLMNIHVQ (245 aa). 42–50 contributes to the ATP binding site; it reads GLPARGKTY. Beta-D-fructose 6-phosphate contacts are provided by arginine 75 and arginine 99. The active site involves aspartate 125. Beta-D-fructose 6-phosphate-binding residues include threonine 127 and arginine 133. Cysteine 155 is an active-site residue. 164–169 lines the ATP pocket; sequence NIMEVK. Beta-D-fructose 6-phosphate is bound by residues lysine 169, arginine 190, and tyrosine 194. Residues 246–520 are fructose-2,6-bisphosphatase; sequence PRTIYLCRHG…RSSADSSRKH (275 aa). Arginine 253 lines the beta-D-fructose 2,6-bisphosphate pocket. The Tele-phosphohistidine intermediate role is filled by histidine 254. 2 residues coordinate beta-D-fructose 2,6-bisphosphate: asparagine 260 and glycine 266. Catalysis depends on glutamate 323, which acts as the Proton donor/acceptor. Beta-D-fructose 2,6-bisphosphate contacts are provided by tyrosine 334, arginine 348, lysine 352, tyrosine 363, glutamine 389, and arginine 393. 345–348 is an ATP binding site; the sequence is YALR. ATP contacts are provided by residues 389-393 and tyrosine 425; that span reads QAVLR. Residues 443–520 are disordered; sequence RERSEDAKKG…RSSADSSRKH (78 aa). Serine 461 bears the Phosphoserine; by AMPK mark. Threonine 463 is modified (phosphothreonine). Serine 467 is modified (phosphoserine). Threonine 471 bears the Phosphothreonine; by PKC mark. The span at 502–520 shows a compositional bias: polar residues; that stretch reads LPGQNMKGSRSSADSSRKH.

This sequence in the C-terminal section; belongs to the phosphoglycerate mutase family. Homodimer. Forms a heterodimer with PFKFB2. In terms of processing, phosphorylation by AMPK stimulates activity. Ubiquitous.

The catalysed reaction is beta-D-fructose 2,6-bisphosphate + H2O = beta-D-fructose 6-phosphate + phosphate. It carries out the reaction beta-D-fructose 6-phosphate + ATP = beta-D-fructose 2,6-bisphosphate + ADP + H(+). Functionally, catalyzes both the synthesis and degradation of fructose 2,6-bisphosphate. In Homo sapiens (Human), this protein is 6-phosphofructo-2-kinase/fructose-2,6-bisphosphatase 3 (PFKFB3).